Here is a 444-residue protein sequence, read N- to C-terminus: Probable glycine dehydrogenase (decarboxylating) subunit 1 (444 aa).

The protein belongs to the GcvP family. N-terminal subunit subfamily. The glycine cleavage system is composed of four proteins: P, T, L and H. In this organism, the P 'protein' is a heterodimer of two subunits.

The enzyme catalyses N(6)-[(R)-lipoyl]-L-lysyl-[glycine-cleavage complex H protein] + glycine + H(+) = N(6)-[(R)-S(8)-aminomethyldihydrolipoyl]-L-lysyl-[glycine-cleavage complex H protein] + CO2. Its function is as follows. The glycine cleavage system catalyzes the degradation of glycine. The P protein binds the alpha-amino group of glycine through its pyridoxal phosphate cofactor; CO(2) is released and the remaining methylamine moiety is then transferred to the lipoamide cofactor of the H protein. The sequence is that of Probable glycine dehydrogenase (decarboxylating) subunit 1 from Chlorobium luteolum (strain DSM 273 / BCRC 81028 / 2530) (Pelodictyon luteolum).